We begin with the raw amino-acid sequence, 636 residues long: uncharacterized protein (636 aa).

The segment at residues 10–36 (CLACRRKKVKCNRQYPCTRCLKYGEAC) is a DNA-binding region (zn(2)-C6 fungal-type). A compositionally biased stretch (polar residues) spans 556 to 580 (NSQSTSEFVSPISDTENGSSSQQVS). Residues 556 to 581 (NSQSTSEFVSPISDTENGSSSQQVSE) form a disordered region.

It is found in the cytoplasm. The protein resides in the nucleus. This is an uncharacterized protein from Schizosaccharomyces pombe (strain 972 / ATCC 24843) (Fission yeast).